We begin with the raw amino-acid sequence, 181 residues long: tRNA (cytidine(56)-2'-O)-methyltransferase (181 aa).

Residues Leu-88, 115–119, and 133–140 each bind S-adenosyl-L-methionine; these read GGEKV and IGNQPHSE.

The protein belongs to the aTrm56 family. In terms of assembly, homodimer.

The protein resides in the cytoplasm. The enzyme catalyses cytidine(56) in tRNA + S-adenosyl-L-methionine = 2'-O-methylcytidine(56) in tRNA + S-adenosyl-L-homocysteine + H(+). In terms of biological role, specifically catalyzes the AdoMet-dependent 2'-O-ribose methylation of cytidine at position 56 in tRNAs. The chain is tRNA (cytidine(56)-2'-O)-methyltransferase from Thermofilum pendens (strain DSM 2475 / Hrk 5).